Consider the following 454-residue polypeptide: Bifunctional protein GlmU (454 aa).

A pyrophosphorylase region spans residues 1–232; it reads MTDRTCLSIV…VDNVIGINNR (232 aa). Residues 11 to 14, Lys25, Gln78, and 83 to 84 each bind UDP-N-acetyl-alpha-D-glucosamine; these read LAAG and GT. Asp108 is a binding site for Mg(2+). UDP-N-acetyl-alpha-D-glucosamine contacts are provided by Gly144, Glu158, Asn173, and Asn230. Asn230 is a binding site for Mg(2+). The linker stretch occupies residues 233–253; it reads AELAEAETIWQNRKRRELMLS. The segment at 254–454 is N-acetyltransferase; sequence GVTLIAPETV…AIKAAKSVSK (201 aa). Positions 319 and 337 each coordinate UDP-N-acetyl-alpha-D-glucosamine. The Proton acceptor role is filled by His349. The UDP-N-acetyl-alpha-D-glucosamine site is built by Tyr352 and Asn363. Acetyl-CoA is bound by residues Ala366, 372 to 373, Ser391, Ser409, and Arg426; that span reads NY.

The protein in the N-terminal section; belongs to the N-acetylglucosamine-1-phosphate uridyltransferase family. In the C-terminal section; belongs to the transferase hexapeptide repeat family. Homotrimer. Mg(2+) serves as cofactor.

The protein resides in the cytoplasm. The enzyme catalyses alpha-D-glucosamine 1-phosphate + acetyl-CoA = N-acetyl-alpha-D-glucosamine 1-phosphate + CoA + H(+). It catalyses the reaction N-acetyl-alpha-D-glucosamine 1-phosphate + UTP + H(+) = UDP-N-acetyl-alpha-D-glucosamine + diphosphate. It participates in nucleotide-sugar biosynthesis; UDP-N-acetyl-alpha-D-glucosamine biosynthesis; N-acetyl-alpha-D-glucosamine 1-phosphate from alpha-D-glucosamine 6-phosphate (route II): step 2/2. The protein operates within nucleotide-sugar biosynthesis; UDP-N-acetyl-alpha-D-glucosamine biosynthesis; UDP-N-acetyl-alpha-D-glucosamine from N-acetyl-alpha-D-glucosamine 1-phosphate: step 1/1. It functions in the pathway bacterial outer membrane biogenesis; LPS lipid A biosynthesis. Its function is as follows. Catalyzes the last two sequential reactions in the de novo biosynthetic pathway for UDP-N-acetylglucosamine (UDP-GlcNAc). The C-terminal domain catalyzes the transfer of acetyl group from acetyl coenzyme A to glucosamine-1-phosphate (GlcN-1-P) to produce N-acetylglucosamine-1-phosphate (GlcNAc-1-P), which is converted into UDP-GlcNAc by the transfer of uridine 5-monophosphate (from uridine 5-triphosphate), a reaction catalyzed by the N-terminal domain. This Brucella melitensis biotype 1 (strain ATCC 23456 / CCUG 17765 / NCTC 10094 / 16M) protein is Bifunctional protein GlmU.